The primary structure comprises 1107 residues: Ubiquitin-associated protein 2-like (1107 aa).

Met-1 carries the post-translational modification N-acetylmethionine. The tract at residues 1-33 is disordered; sequence MMTSVGTNRARGNWEQPQNQNQTQHKQRPQATA. One can recognise a UBA domain in the interval 49 to 89; that stretch reads DFEEKVKQLIDITGKNQDECVIALHDCNGDVNRAINVLLEG. The segment at 92–229 is disordered; that stretch reads DTHSWEMVGK…NTWNNTGHFE (138 aa). Basic and acidic residues predominate over residues 118–132; the sequence is EEGKENRDRDRDYSR. A compositionally biased stretch (basic residues) spans 133 to 145; the sequence is RRGGPPRRGRGAS. Arg-187 and Arg-190 each carry asymmetric dimethylarginine. The segment covering 213 to 226 has biased composition (low complexity); it reads NYGNSSGNTWNNTG. Phosphoserine is present on residues Ser-376, Ser-380, and Ser-436. The residue at position 445 (Thr-445) is a Phosphothreonine. Disordered regions lie at residues 461 to 513, 550 to 676, and 689 to 814; these read AVAT…KKTS, SDYE…IPSL, and ANQH…LPPG. Residues Ser-474, Ser-487, Ser-490, Ser-491, and Ser-497 each carry the phosphoserine modification. Composition is skewed to low complexity over residues 494–505 and 554–589; these read QSSSPQPAQQKL and STPTTSASSSQAPSSLYTSTASESSSTVSSNQSQES. A compositionally biased stretch (polar residues) spans 590–656; it reads GYQSGPIQST…TQLQTTQSVE (67 aa). A phosphoserine mark is found at Ser-624, Ser-625, Ser-628, and Ser-629. Residues 665–675 are compositionally biased toward low complexity; sequence SESPSTSSIPS. The segment covering 689 to 713 has biased composition (polar residues); the sequence is ANQHSSSLSGLSHTEEIPNTTTTQH. Over residues 714-804 the composition is skewed to low complexity; the sequence is SSALSTQQNT…STRSSVATTS (91 aa). Phosphoserine is present on residues Ser-872 and Ser-879. Disordered regions lie at residues 885–921 and 1060–1107; these read FGRGDASSPAPATTLAQPQQNQTQTHHTTQQTFLNPA and QQPH…WGAN. Low complexity-rich tracts occupy residues 893-916 and 1073-1087; these read PAPATTLAQPQQNQTQTHHTTQQT and QDGQTGSGQRSQTSS. Residues 1088-1107 are compositionally biased toward polar residues; that stretch reads IPQKPQTNKSAYNSYSWGAN.

As to quaternary structure, interacts with BMI1. Part of a complex consisting of UBAP2L, BMI1 and RNF2. Interacts with G3BP1 (via NTF2 domain); promoting stress granule formation.

It localises to the nucleus. The protein localises to the chromosome. Its subcellular location is the cytoplasm. The protein resides in the stress granule. Functionally, recruits the ubiquitination machinery to RNA polymerase II for polyubiquitination, removal and degradation, when the transcription-coupled nucleotide excision repair (TC-NER) machinery fails to resolve DNA damage. Plays an important role in the activity of long-term repopulating hematopoietic stem cells (LT-HSCs). Is a regulator of stress granule assembly, required for their efficient formation. Required for proper brain development and neocortex lamination. The sequence is that of Ubiquitin-associated protein 2-like from Mus musculus (Mouse).